The chain runs to 197 residues: ATP synthase subunit delta', mitochondrial (197 aa).

The transit peptide at 1 to 19 (MFRRATSTFLSRASATRRF) directs the protein to the mitochondrion.

The protein belongs to the ATPase epsilon chain family. F-type ATPases have 2 components, CF(1) - the catalytic core - and CF(0) - the membrane proton channel. CF(1) has five subunits: alpha(3), beta(3), gamma(1), delta(1), epsilon(1). CF(0) has three main subunits: a, b and c.

The protein localises to the mitochondrion. It is found in the mitochondrion inner membrane. Its function is as follows. Mitochondrial membrane ATP synthase (F(1)F(0) ATP synthase or Complex V) produces ATP from ADP in the presence of a proton gradient across the membrane which is generated by electron transport complexes of the respiratory chain. F-type ATPases consist of two structural domains, F(1) - containing the extramembraneous catalytic core, and F(0) - containing the membrane proton channel, linked together by a central stalk and a peripheral stalk. During catalysis, ATP turnover in the catalytic domain of F(1) is coupled via a rotary mechanism of the central stalk subunits to proton translocation. Part of the complex F(1) domain and of the central stalk which is part of the complex rotary element. Rotation of the central stalk against the surrounding alpha(3)beta(3) subunits leads to hydrolysis of ATP in three separate catalytic sites on the beta subunits. The chain is ATP synthase subunit delta', mitochondrial from Pisum sativum (Garden pea).